We begin with the raw amino-acid sequence, 552 residues long: MQSFLVAEIQNALRSASVTTGQSIIIEKPTSPKFGDYATNIAFLAAKELKRNPRQLAEELTGHFRFPEGTVTKTEVAGPGFINFFMEPAFIMQSAERVFREGAEYGKGREGQGKTAIVEYVSANPTGPLTIGRGRGGVLGDCIANLAEAQGYHVNREYYFNDAGRQMQILGESVRYRYMELCGRTIDFPDTHYKGGYIGEIAEKIHSEHGEDLLHVESIEPFRSEAESIIFSSIQKTLGRLGIVHDSFFNEHTLYTADLNGISPNQNVIDRLREKGFIGEYDGATWFLTTKLGQEKDKVLIKSSGEPSYRLPDIAYHVTKYARGFDMIINVFGADHIDEYPDVLEALKILGHDTAHVRIAINQFVTTTVNGETVKMSTRKGNADLLDDLIDDVGPDATRLFFIMRSKDSHLNFDVELAKKQSKDNPVFYLQYAHARICSLLRLAWSEIGFDAAKRPEPGVLMRLTTPEELQLAFGILDFGEASRSAFRMLEPQKMVDYMHSIAELFHRFYQECPILKAEPEIAEARLFLAVAVRQVLQNGFRILGISAPESM.

The 'HIGH' region signature appears at 123–133; it reads ANPTGPLTIGR.

This sequence belongs to the class-I aminoacyl-tRNA synthetase family. As to quaternary structure, monomer.

It localises to the cytoplasm. The catalysed reaction is tRNA(Arg) + L-arginine + ATP = L-arginyl-tRNA(Arg) + AMP + diphosphate. This Chlorobium luteolum (strain DSM 273 / BCRC 81028 / 2530) (Pelodictyon luteolum) protein is Arginine--tRNA ligase.